The following is a 398-amino-acid chain: Leucine aminopeptidase 1 (398 aa).

Residues 1–20 form the signal peptide; it reads MKFLQTSLIAAALPAALVSG. The propeptide occupies 21–87; it reads RFVIENEGDN…LRAWTQSQAS (67 aa). An N-linked (GlcNAc...) asparagine glycan is attached at Asn179. Residues His187, Asp206, Glu245, and Asp272 each coordinate Zn(2+). Residues Cys321 and Cys325 are joined by a disulfide bond. Zn(2+) is bound at residue His354.

Belongs to the peptidase M28 family. M28E subfamily. Monomer. The cofactor is Zn(2+).

It localises to the secreted. In terms of biological role, extracellular aminopeptidase that allows assimilation of proteinaceous substrates. The sequence is that of Leucine aminopeptidase 1 (lap1) from Trichoderma harzianum (Hypocrea lixii).